Reading from the N-terminus, the 427-residue chain is Serine--tRNA ligase (427 aa).

231-233 (TAE) contributes to the L-serine binding site. ATP is bound at residue 262 to 264 (RSE). E285 provides a ligand contact to L-serine. 349–352 (EISS) contacts ATP. L-serine is bound at residue S385.

The protein belongs to the class-II aminoacyl-tRNA synthetase family. Type-1 seryl-tRNA synthetase subfamily. Homodimer. The tRNA molecule binds across the dimer.

The protein resides in the cytoplasm. It carries out the reaction tRNA(Ser) + L-serine + ATP = L-seryl-tRNA(Ser) + AMP + diphosphate + H(+). It catalyses the reaction tRNA(Sec) + L-serine + ATP = L-seryl-tRNA(Sec) + AMP + diphosphate + H(+). Its pathway is aminoacyl-tRNA biosynthesis; selenocysteinyl-tRNA(Sec) biosynthesis; L-seryl-tRNA(Sec) from L-serine and tRNA(Sec): step 1/1. Its function is as follows. Catalyzes the attachment of serine to tRNA(Ser). Is also able to aminoacylate tRNA(Sec) with serine, to form the misacylated tRNA L-seryl-tRNA(Sec), which will be further converted into selenocysteinyl-tRNA(Sec). This is Serine--tRNA ligase from Brucella abortus (strain S19).